The primary structure comprises 177 residues: Cytoglobin-1 (177 aa).

The region spanning 16 to 165 (PLTDKERVMI…LCCSIKAVYE (150 aa)) is the Globin domain. Heme b is bound by residues His-79 and His-111.

It belongs to the globin family. In terms of assembly, monomeric.

Its subcellular location is the cytoplasm. The protein localises to the nucleus. It carries out the reaction Fe(II)-heme b-[protein] + nitric oxide + O2 = Fe(III)-heme b-[protein] + nitrate. The catalysed reaction is Fe(III)-heme b-[protein] + nitric oxide + H2O = Fe(II)-heme b-[protein] + nitrite + 2 H(+). The enzyme catalyses 2 superoxide + 2 H(+) = H2O2 + O2. It catalyses the reaction H2O2 + AH2 = A + 2 H2O. Its function is as follows. Probable multifunctional globin with a hexacoordinated heme iron required for the catalysis of various reactions depending on redox condition of the cell as well as oxygen availability. Has a nitric oxide dioxygenase (NOD) activity and is most probably involved in cell-mediated and oxygen-dependent nitric oxide consumption. Under normoxic conditions functions as a nitric oxide dioxygenase (NOD) but under hypoxic conditions the globin may switch its function to that of a nitrite (NO2) reductase (NiR), generating nitric oxide. Could also have peroxidase and superoxide dismutase activities, detoxifying reactive oxygen species and protecting cells against oxidative stress. Also binds dioxygen with low affinity and could function as an oxygen sensor but has probably no function as a respiratory oxygen carrier. This Oryzias latipes (Japanese rice fish) protein is Cytoglobin-1.